We begin with the raw amino-acid sequence, 460 residues long: Muscarinic acetylcholine receptor M1 (460 aa).

Residues 1–22 (MNTSAPPAVSPNITVLAPGKGP) lie on the Extracellular side of the membrane. N-linked (GlcNAc...) asparagine glycosylation is found at asparagine 2 and asparagine 12. The helical transmembrane segment at 23 to 48 (WQVAFIGITTGLLSLATVTGNLLVLI) threads the bilayer. The Cytoplasmic segment spans residues 49-62 (SFKVNTELKTVNNY). A helical transmembrane segment spans residues 63 to 84 (FLLSLACADLIIGTFSMNLYTT). At 85 to 95 (YLLMGHWALGT) the chain is on the extracellular side. A helical transmembrane segment spans residues 96-121 (LACDLWLALDYVASNASVMNLLLISF). A disulfide bridge links cysteine 98 with cysteine 178. The Cytoplasmic segment spans residues 122–142 (DRYFSVTRPLSYRAKRTPRRA). Residues 143–164 (ALMIGLAWLVSFVLWAPAILFW) traverse the membrane as a helical segment. Topologically, residues 165 to 185 (QYLVGERTVLAGQCYIQFLSQ) are extracellular. The chain crosses the membrane as a helical span at residues 186 to 209 (PIITFGTAMAAFYLPVTVMCTLYW). Residues 210 to 366 (RIYRETENRA…LVKEKKAART (157 aa)) are Cytoplasmic-facing. Disordered regions lie at residues 225 to 256 (LQGSETPGKGGGSSSSSERSQPGAEGSPETPP), 274 to 297 (WKEEEEEDEGSMESLTSSEGEEPG), and 310 to 351 (EAQA…QLAK). Threonine 230 bears the Phosphothreonine mark. A compositionally biased stretch (low complexity) spans 238–247 (SSSSERSQPG). A compositionally biased stretch (basic residues) spans 328–343 (RPTKKGRDRAGKGQKP). Residues 367-390 (LSAILLAFILTWTPYNIMVLVSTF) traverse the membrane as a helical segment. Residues 391–397 (CKDCVPE) lie on the Extracellular side of the membrane. Residues 398–420 (TLWELGYWLCYVNSTINPMCYAL) traverse the membrane as a helical segment. Residues 421–460 (CNKAFRDTFRLLLLCRWDKRRWRKIPKRPGSVHRTPSRQC) are Cytoplasmic-facing. Threonine 428 is modified (phosphothreonine). Serine 451 carries the post-translational modification Phosphoserine. A Phosphothreonine modification is found at threonine 455. Serine 457 carries the post-translational modification Phosphoserine.

Belongs to the G-protein coupled receptor 1 family. Muscarinic acetylcholine receptor subfamily. CHRM1 sub-subfamily. Interacts with GPRASP2. Interacts with TMEM147.

The protein resides in the cell membrane. It is found in the postsynaptic cell membrane. The muscarinic acetylcholine receptor mediates various cellular responses, including inhibition of adenylate cyclase, breakdown of phosphoinositides and modulation of potassium channels through the action of G proteins. Primary transducing effect is Pi turnover. The polypeptide is Muscarinic acetylcholine receptor M1 (CHRM1) (Homo sapiens (Human)).